A 534-amino-acid polypeptide reads, in one-letter code: Serine/threonine-protein kinase NLK (534 aa).

Sufficient for interaction with DAPK3 regions lie at residues 8-132 and 131-423; these read LVSC…KAHH and HHHQ…SKRI. Required for interaction with TAB2 regions lie at residues 8–311 and 441–534; these read LVSC…VVTQ and YHTC…LVWE. Disordered regions lie at residues 29–79 and 97–147; these read AAAA…SSAA and QQPY…DIEP. The span at 33–61 shows a compositional bias: basic residues; that stretch reads GHHHHHHHHLPHLPPPHLHHHHHPQHHLH. Low complexity predominate over residues 110-126; sequence PGPAAAAPAQVQAAAAA. Basic residues predominate over residues 129-138; it reads KAHHHQHSHH. Residues 145–434 form the Protein kinase domain; sequence IEPDRPIGYG…AKDALAHPYL (290 aa). ATP contacts are provided by residues 151–159 and Lys174; that span reads IGYGAFGVV. The Proton acceptor role is filled by Asp271. Thr305 carries the phosphothreonine; by autocatalysis modification. Residues 305–307 carry the TQE motif; it reads TQE. Positions 435-534 are required for homodimerization and kinase activation and localization to the nucleus; sequence DEGRLRYHTC…EMPPSPLVWE (100 aa). At Ser529 the chain carries Phosphoserine.

Belongs to the protein kinase superfamily. CMGC Ser/Thr protein kinase family. MAP kinase subfamily. As to quaternary structure, homodimer. Homodimerization is required for intermolecular autophosphorylation, kinase activation and nuclear localization. May interact with components of cullin-RING-based SCF (SKP1-CUL1-F-box protein) E3 ubiquitin-protein ligase complexes. Interacts with LEF1, MEF2A, MYBL1 and MYBL2. Interacts with the upstream activating kinases HIPK2 and MAP3K7/TAK1. Interaction with MAP3K7/TAK1 seems to be indirect, and may be mediated by other proteins such as STAT3, TAB1 and TAB2. Interacts with and phosphorylates a number of transcription factors including FOXO1, FOXO3, FOXO4, MYB, NOTCH1 and TCF7L2/TCF4. Interacts with DAPK3/ZIPK, and this interaction may disrupt interaction with transcription factors such as TCF7L2/TCF4. Forms a transcriptional repressor complex with CHD7, PPARG and SETDB1. Interacts with RNF138/NARF. Interacts with ATF5; the interaction stabilizes ATF5 at the protein level in a kinase-independent manner. Requires Mg(2+) as cofactor. In terms of processing, phosphorylated on Thr-305. Intermolecular autophosphorylation on Thr-305 activates the enzyme.

It localises to the nucleus. The protein localises to the cytoplasm. The enzyme catalyses L-seryl-[protein] + ATP = O-phospho-L-seryl-[protein] + ADP + H(+). It catalyses the reaction L-threonyl-[protein] + ATP = O-phospho-L-threonyl-[protein] + ADP + H(+). With respect to regulation, activated by the non-canonical Wnt signaling pathway, in which WNT5A leads to activation of MAP3K7/TAK1 and HIPK2, which subsequently phosphorylates and activates this protein. Activated by dimerization and subsequent intermolecular autophosphorylation on Thr-305. Other cytokines such as IL6 may also activate this regulatory circuit. In terms of biological role, serine/threonine-protein kinase that regulates a number of transcription factors with key roles in cell fate determination. Positive effector of the non-canonical Wnt signaling pathway, acting downstream of WNT5A, MAP3K7/TAK1 and HIPK2. Negative regulator of the canonical Wnt/beta-catenin signaling pathway. Binds to and phosphorylates TCF7L2/TCF4 and LEF1, promoting the dissociation of the TCF7L2/LEF1/beta-catenin complex from DNA, as well as the ubiquitination and subsequent proteolysis of LEF1. Together these effects inhibit the transcriptional activation of canonical Wnt/beta-catenin target genes. Negative regulator of the Notch signaling pathway. Binds to and phosphorylates NOTCH1, thereby preventing the formation of a transcriptionally active ternary complex of NOTCH1, RBPJ/RBPSUH and MAML1. Negative regulator of the MYB family of transcription factors. Phosphorylation of MYB leads to its subsequent proteolysis while phosphorylation of MYBL1 and MYBL2 inhibits their interaction with the coactivator CREBBP. Other transcription factors may also be inhibited by direct phosphorylation of CREBBP itself. Acts downstream of IL6 and MAP3K7/TAK1 to phosphorylate STAT3, which is in turn required for activation of NLK by MAP3K7/TAK1. Upon IL1B stimulus, cooperates with ATF5 to activate the transactivation activity of C/EBP subfamily members. Phosphorylates ATF5 but also stabilizes ATF5 protein levels in a kinase-independent manner. Acts as an inhibitor of the mTORC1 complex in response to osmotic stress by mediating phosphorylation of RPTOR, thereby preventing recruitment of the mTORC1 complex to lysosomes. The protein is Serine/threonine-protein kinase NLK (NLK) of Bos taurus (Bovine).